The sequence spans 245 residues: 14-3-3 protein zeta (245 aa).

Belongs to the 14-3-3 family. In terms of assembly, homodimer.

It localises to the cytoplasm. In terms of biological role, adapter protein implicated in the regulation of a large spectrum of both general and specialized signaling pathways. Binds to a large number of partners, usually by recognition of a phosphoserine or phosphothreonine motif. Binding generally results in the modulation of the activity of the binding partner. The sequence is that of 14-3-3 protein zeta (ywhaz) from Xenopus tropicalis (Western clawed frog).